A 243-amino-acid chain; its full sequence is Type III pantothenate kinase (243 aa).

Asp6–Lys13 lines the ATP pocket. Gly101–Ile104 lines the substrate pocket. The active-site Proton acceptor is Asp103. Thr125 is an ATP binding site. Thr176 is a substrate binding site.

Belongs to the type III pantothenate kinase family. Homodimer. NH4(+) is required as a cofactor. The cofactor is K(+).

It localises to the cytoplasm. It carries out the reaction (R)-pantothenate + ATP = (R)-4'-phosphopantothenate + ADP + H(+). Its pathway is cofactor biosynthesis; coenzyme A biosynthesis; CoA from (R)-pantothenate: step 1/5. Catalyzes the phosphorylation of pantothenate (Pan), the first step in CoA biosynthesis. This chain is Type III pantothenate kinase, found in Mycoplasma mobile (strain ATCC 43663 / 163K / NCTC 11711) (Mesomycoplasma mobile).